Consider the following 191-residue polypeptide: Orotate phosphoribosyltransferase (191 aa).

114-122 lines the 5-phospho-alpha-D-ribose 1-diphosphate pocket; that stretch reads EDVVTTGKS. Orotate is bound by residues Thr-118 and Arg-146.

This sequence belongs to the purine/pyrimidine phosphoribosyltransferase family. PyrE subfamily. Homodimer. The cofactor is Mg(2+).

The catalysed reaction is orotidine 5'-phosphate + diphosphate = orotate + 5-phospho-alpha-D-ribose 1-diphosphate. The protein operates within pyrimidine metabolism; UMP biosynthesis via de novo pathway; UMP from orotate: step 1/2. Its function is as follows. Catalyzes the transfer of a ribosyl phosphate group from 5-phosphoribose 1-diphosphate to orotate, leading to the formation of orotidine monophosphate (OMP). The chain is Orotate phosphoribosyltransferase from Clostridium botulinum (strain ATCC 19397 / Type A).